A 764-amino-acid polypeptide reads, in one-letter code: MSTNSFHDYVDLKSRTNTRQFSDDEEFTTPPKLSNFGSALLSHTEKTSASEILSSHNNDKIANRLEEMDRSSSRSHPPPSMGNLTSGHTSTSSHSTLFGRYLRNNHQTSMTTMNTSDIEINVGNSLDKSFERIRNLRQNMKEDITAKYAERRSKRFLISNRTTKLGPAKRAMTLTNIFDEDVPNSPNQPINARETVELPLEDSHQTNFKETKRNTDYDSIDFGDLNPIQYIKKHNLPTSDLPLISQIYFDKQREENRQAALRKHSSRELLYKSRSSSSSLSSNNLLANKDNSITSNNGSQPRRKVSTGSSSSKSSIEIRRALKENIDTSNNSNFNSPIHKIYKGISRNKDSDSEKREVLRNISINANHADNLLQQENKRLKRSLDDAITNENINSKNLEVFYHRPAPKPPVTKKVEIVEPAKSASLSNNRNIITVNDSQYEKIELLGRGGSSRVYKVKGSGNRVYALKRVSFDAFDDSSIDGFKGEIELLEKLKDQKRVIQLLDYEMGDGLLYLIMECGDHDLSQILNQRSGMPLDFNFVRFYTKEMLLCIKVVHDAGIVHSDLKPANFVLVKGILKIIDFGIANAVPEHTVNIYRETQIGTPNYMAPEALVAMNYTQNSENQHEGNKWKVGRPSDMWSCGCIIYQMIYGKPPYGSFQGQNRLLAIMNPDVKIPFPEHTSNNEKIPKSAIELMKACLYRNPDKRWTVDKVLSSTFLQPFMISGSIMEDLIRNAVRYGSEKPHISQDDLNDVVDTVLRKFADYKI.

3 disordered regions span residues 66–95 (EEMD…SSHS), 197–216 (ELPL…RNTD), and 258–316 (QAAL…KSSI). Over residues 85-95 (TSGHTSTSSHS) the composition is skewed to low complexity. Basic and acidic residues predominate over residues 201–216 (EDSHQTNFKETKRNTD). Composition is skewed to low complexity over residues 272–292 (KSRS…KDNS) and 306–315 (STGSSSSKSS). The 281-residue stretch at 440 to 720 (YEKIELLGRG…LSSTFLQPFM (281 aa)) folds into the Protein kinase domain. ATP contacts are provided by residues 446-454 (LGRGGSSRV) and Lys-468. The active-site Proton acceptor is the Asp-563.

Belongs to the protein kinase superfamily. Ser/Thr protein kinase family. Post-translationally, autophosphorylated.

It catalyses the reaction L-seryl-[protein] + ATP = O-phospho-L-seryl-[protein] + ADP + H(+). It carries out the reaction L-threonyl-[protein] + ATP = O-phospho-L-threonyl-[protein] + ADP + H(+). The enzyme catalyses L-tyrosyl-[protein] + ATP = O-phospho-L-tyrosyl-[protein] + ADP + H(+). In terms of biological role, involved in mitotic spindle assembly checkpoint signaling, a process that delays anaphase until chromosomes are bioriented on the spindle, and in the repair of incorrect mitotic kinetochore-spindle microtubule attachments. Phosphorylates SPC105 on MELT motifs; phosphorylation is required for recruitment of the BUB1-BUB3 complex to kinetochores. Phosphorylates CNN1, which contributes to the enrichment of CNN1 on anaphase kinetochores. Implicated in spindle pole body (SPD) duplication. Phosphorylates the SPC29 and SPC110 spindle pole body components. This chain is Serine/threonine-protein kinase MPS1 (MPS1), found in Saccharomyces cerevisiae (strain ATCC 204508 / S288c) (Baker's yeast).